Consider the following 516-residue polypeptide: uncharacterized protein (516 aa).

The tract at residues 1-35 is disordered; it reads MAERTSESSSESASFDLEKQQSNHHDRYQSSVSSE. Residues 16 to 28 show a composition bias toward basic and acidic residues; the sequence is DLEKQQSNHHDRY. The residue at position 31 (Ser31) is a Phosphoserine. Helical transmembrane passes span 77 to 97, 111 to 131, 143 to 163, 166 to 186, 198 to 218, 231 to 251, 301 to 321, 345 to 365, 386 to 406, 412 to 432, 439 to 461, and 481 to 501; these read VAVM…FSGA, VALL…VVWA, MIIA…AKDI, VMIC…TVAG, GLVI…SPIV, WTSY…IIFH, LLIF…VYGI, SLPY…VALF, LPSM…LAWT, IHWI…ITIF, IIDC…RSSF, and AGSL…MLFL.

This sequence belongs to the major facilitator superfamily.

The protein resides in the membrane. This is an uncharacterized protein from Schizosaccharomyces pombe (strain 972 / ATCC 24843) (Fission yeast).